A 290-amino-acid polypeptide reads, in one-letter code: 4-hydroxybenzoate octaprenyltransferase (290 aa).

The next 9 helical transmembrane spans lie at 23 to 43, 46 to 66, 96 to 116, 118 to 138, 141 to 161, 169 to 189, 212 to 232, 235 to 255, and 265 to 285; these read IGTE…SDGY, LKMF…GCAI, AIWV…FLPI, TFYW…MKRY, LPQV…YTAT, CWLL…QYAI, IPII…ALYI, LLFP…IYQW, and LCFW…LAIL.

Belongs to the UbiA prenyltransferase family. Mg(2+) serves as cofactor.

The protein resides in the cell inner membrane. The catalysed reaction is all-trans-octaprenyl diphosphate + 4-hydroxybenzoate = 4-hydroxy-3-(all-trans-octaprenyl)benzoate + diphosphate. It participates in cofactor biosynthesis; ubiquinone biosynthesis. In terms of biological role, catalyzes the prenylation of para-hydroxybenzoate (PHB) with an all-trans polyprenyl group. Mediates the second step in the final reaction sequence of ubiquinone-8 (UQ-8) biosynthesis, which is the condensation of the polyisoprenoid side chain with PHB, generating the first membrane-bound Q intermediate 3-octaprenyl-4-hydroxybenzoate. The protein is 4-hydroxybenzoate octaprenyltransferase of Acinetobacter baylyi (strain ATCC 33305 / BD413 / ADP1).